Here is a 455-residue protein sequence, read N- to C-terminus: Argininosuccinate synthase (455 aa).

ATP contacts are provided by residues 17–25 (AFSGGLDTS) and Ala-43. Tyr-99 lines the L-citrulline pocket. 2 residues coordinate ATP: Gly-129 and Thr-131. 3 residues coordinate L-aspartate: Thr-131, Asn-135, and Asp-136. Asn-135 lines the L-citrulline pocket. Residue Asp-136 coordinates ATP. Positions 139 and 192 each coordinate L-citrulline. ATP is bound at residue Asp-194. Residues Thr-201, Glu-203, and Glu-280 each contribute to the L-citrulline site. Polar residues predominate over residues 434–448 (TGLPQVDNNNLSSGR). The disordered stretch occupies residues 434–455 (TGLPQVDNNNLSSGRGLQDKRQ).

It belongs to the argininosuccinate synthase family. Type 2 subfamily. Homotetramer.

The protein localises to the cytoplasm. The catalysed reaction is L-citrulline + L-aspartate + ATP = 2-(N(omega)-L-arginino)succinate + AMP + diphosphate + H(+). It functions in the pathway amino-acid biosynthesis; L-arginine biosynthesis; L-arginine from L-ornithine and carbamoyl phosphate: step 2/3. This Yersinia pestis protein is Argininosuccinate synthase (argG).